A 429-amino-acid chain; its full sequence is MLVVKKTPYIKGILSAPPSKSYTHRAVICASLANGLSNLKNPLNGADCLSSAHACEMFGAEIGLGNEKWIVMGSELKTPDNIVDIGNSGTTLRILTGISSQISNGYTVLTGDDSIRKRPMQPLLDALKQLGLICFSTKNNGTAPIVVKSGKISSNVVEIRGDMSSQFITSLMMTLPFSEDDSEIILTTPLKSEPYLNITIDVLDKFGVKIGKIEEKNKSGYKIKGNQTYKPCDYTIEGDYSSASYLVAAGVLLNSDIVIKNVFKDSKQGDREIIEIVKKMGADVEINDDNVKITGPYELNGIEIDVTDIPDLVPTIAVLGCFAKGKTVVYNGEHVRLKECDRLAACTAELSKMGARIEEKKDGLIITGVHKLNGAKLKTYHDHRLVMAFTIAGMLADGETIIEGEDSVKISFPDFVDKMKSIGSNIKVI.

3 residues coordinate 3-phosphoshikimate: lysine 20, serine 21, and arginine 25. Lysine 20 is a binding site for phosphoenolpyruvate. Phosphoenolpyruvate contacts are provided by glycine 89 and arginine 118. 3-phosphoshikimate is bound by residues serine 164, serine 165, glutamine 166, serine 192, aspartate 311, and lysine 338. Glutamine 166 lines the phosphoenolpyruvate pocket. Aspartate 311 functions as the Proton acceptor in the catalytic mechanism. Residues arginine 342 and arginine 384 each coordinate phosphoenolpyruvate.

Belongs to the EPSP synthase family. In terms of assembly, monomer.

It is found in the cytoplasm. The catalysed reaction is 3-phosphoshikimate + phosphoenolpyruvate = 5-O-(1-carboxyvinyl)-3-phosphoshikimate + phosphate. It participates in metabolic intermediate biosynthesis; chorismate biosynthesis. In terms of biological role, catalyzes the transfer of the enolpyruvyl moiety of phosphoenolpyruvate (PEP) to the 5-hydroxyl of shikimate-3-phosphate (S3P) to produce enolpyruvyl shikimate-3-phosphate and inorganic phosphate. This Methanococcus maripaludis (strain DSM 14266 / JCM 13030 / NBRC 101832 / S2 / LL) protein is 3-phosphoshikimate 1-carboxyvinyltransferase.